The sequence spans 457 residues: RuvB-like helicase 1 (457 aa).

72 to 79 (GAPGTGKT) serves as a coordination point for ATP.

This sequence belongs to the RuvB family. As to quaternary structure, may form heterododecamers with RVB2. Component of the SWR1 chromatin remodeling complex, the INO80 chromatin remodeling complex, and of the R2TP complex.

Its subcellular location is the nucleus. The enzyme catalyses ATP + H2O = ADP + phosphate + H(+). Its function is as follows. DNA helicase which participates in several chromatin remodeling complexes, including the SWR1 and the INO80 complexes. The SWR1 complex mediates the ATP-dependent exchange of histone H2A for the H2A variant HZT1 leading to transcriptional regulation of selected genes by chromatin remodeling. The INO80 complex remodels chromatin by shifting nucleosomes and is involved in DNA repair. Also involved in pre-rRNA processing. The chain is RuvB-like helicase 1 (RBV1) from Debaryomyces hansenii (strain ATCC 36239 / CBS 767 / BCRC 21394 / JCM 1990 / NBRC 0083 / IGC 2968) (Yeast).